The sequence spans 175 residues: Ribosome maturation factor RimM (175 aa).

A PRC barrel domain is found at 96-175 (EGDYYWHDLI…TITVDWDAGF (80 aa)).

This sequence belongs to the RimM family. Binds ribosomal protein uS19.

It localises to the cytoplasm. Functionally, an accessory protein needed during the final step in the assembly of 30S ribosomal subunit, possibly for assembly of the head region. Essential for efficient processing of 16S rRNA. May be needed both before and after RbfA during the maturation of 16S rRNA. It has affinity for free ribosomal 30S subunits but not for 70S ribosomes. In Actinobacillus pleuropneumoniae serotype 5b (strain L20), this protein is Ribosome maturation factor RimM.